The chain runs to 338 residues: RNA 3'-terminal phosphate cyclase (338 aa).

ATP-binding positions include glutamine 103 and 283-287 (YLADQ). Residue histidine 308 is the Tele-AMP-histidine intermediate of the active site.

This sequence belongs to the RNA 3'-terminal cyclase family. Type 1 subfamily.

It is found in the cytoplasm. It catalyses the reaction a 3'-end 3'-phospho-ribonucleotide-RNA + ATP = a 3'-end 2',3'-cyclophospho-ribonucleotide-RNA + AMP + diphosphate. Functionally, catalyzes the conversion of 3'-phosphate to a 2',3'-cyclic phosphodiester at the end of RNA. The mechanism of action of the enzyme occurs in 3 steps: (A) adenylation of the enzyme by ATP; (B) transfer of adenylate to an RNA-N3'P to produce RNA-N3'PP5'A; (C) and attack of the adjacent 2'-hydroxyl on the 3'-phosphorus in the diester linkage to produce the cyclic end product. The biological role of this enzyme is unknown but it is likely to function in some aspects of cellular RNA processing. This is RNA 3'-terminal phosphate cyclase from Escherichia coli O139:H28 (strain E24377A / ETEC).